The sequence spans 659 residues: DNA ligase (659 aa).

NAD(+) contacts are provided by residues 32–36 (DQQYD), 81–82 (SL), and E110. The active-site N6-AMP-lysine intermediate is K112. NAD(+) is bound by residues R133, E167, K282, and K306. Zn(2+) is bound by residues C399, C402, C415, and C420. The BRCT domain occupies 582–659 (IKNNIFKNKK…QEHEFEELIK (78 aa)).

This sequence belongs to the NAD-dependent DNA ligase family. LigA subfamily. Mg(2+) is required as a cofactor. It depends on Mn(2+) as a cofactor.

The enzyme catalyses NAD(+) + (deoxyribonucleotide)n-3'-hydroxyl + 5'-phospho-(deoxyribonucleotide)m = (deoxyribonucleotide)n+m + AMP + beta-nicotinamide D-nucleotide.. Its function is as follows. DNA ligase that catalyzes the formation of phosphodiester linkages between 5'-phosphoryl and 3'-hydroxyl groups in double-stranded DNA using NAD as a coenzyme and as the energy source for the reaction. It is essential for DNA replication and repair of damaged DNA. This Phytoplasma mali (strain AT) protein is DNA ligase.